We begin with the raw amino-acid sequence, 220 residues long: Probable N-acetyl-alpha-D-glucosaminyl L-malate deacetylase 2 (220 aa).

His-11, Asp-14, and His-125 together coordinate Zn(2+).

The protein belongs to the PIGL family. The cofactor is Zn(2+).

It catalyses the reaction (S)-malyl N-acetyl-alpha-D-glucosaminide + H2O = (S)-malyl alpha-D-glucosaminide + acetate. Functionally, involved in bacillithiol (BSH) biosynthesis. Catalyzes the second step of the pathway, the deacetylation of N-acetylglucosaminylmalate (GlcNAc-Mal) to glucosamine malate (GlcN-Mal). Has weak activity compared with bshB1. The sequence is that of Probable N-acetyl-alpha-D-glucosaminyl L-malate deacetylase 2 from Bacillus cereus (strain ATCC 14579 / DSM 31 / CCUG 7414 / JCM 2152 / NBRC 15305 / NCIMB 9373 / NCTC 2599 / NRRL B-3711).